The following is a 543-amino-acid chain: CTP synthase (543 aa).

The amidoligase domain stretch occupies residues 1 to 265 (MARYIFITGG…DGEVLRHFGL (265 aa)). S13 serves as a coordination point for CTP. S13 provides a ligand contact to UTP. 14-19 (SLGKGL) serves as a coordination point for ATP. Y54 contributes to the L-glutamine binding site. D71 contacts ATP. Mg(2+) is bound by residues D71 and E139. CTP contacts are provided by residues 146-148 (DIE), 186-191 (KTKPTQ), and K222. Residues 186–191 (KTKPTQ) and K222 contribute to the UTP site. The region spanning 290 to 542 (TIGVVGKYVG…IAAAVKQARL (253 aa)) is the Glutamine amidotransferase type-1 domain. Residue G354 coordinates L-glutamine. The active-site Nucleophile; for glutamine hydrolysis is C381. Residues 382–385 (LGMQ), E405, and R470 each bind L-glutamine. Residues H515 and E517 contribute to the active site.

Belongs to the CTP synthase family. As to quaternary structure, homotetramer.

It carries out the reaction UTP + L-glutamine + ATP + H2O = CTP + L-glutamate + ADP + phosphate + 2 H(+). The catalysed reaction is L-glutamine + H2O = L-glutamate + NH4(+). The enzyme catalyses UTP + NH4(+) + ATP = CTP + ADP + phosphate + 2 H(+). Its pathway is pyrimidine metabolism; CTP biosynthesis via de novo pathway; CTP from UDP: step 2/2. Allosterically activated by GTP, when glutamine is the substrate; GTP has no effect on the reaction when ammonia is the substrate. The allosteric effector GTP functions by stabilizing the protein conformation that binds the tetrahedral intermediate(s) formed during glutamine hydrolysis. Inhibited by the product CTP, via allosteric rather than competitive inhibition. In terms of biological role, catalyzes the ATP-dependent amination of UTP to CTP with either L-glutamine or ammonia as the source of nitrogen. Regulates intracellular CTP levels through interactions with the four ribonucleotide triphosphates. In Novosphingobium aromaticivorans (strain ATCC 700278 / DSM 12444 / CCUG 56034 / CIP 105152 / NBRC 16084 / F199), this protein is CTP synthase.